The chain runs to 500 residues: Cysteine--tRNA ligase (500 aa).

Zn(2+) is bound at residue cysteine 30. A 'HIGH' region motif is present at residues 32–42; that stretch reads PTVYDYAHIGN. Zn(2+) is bound by residues cysteine 224, histidine 263, and glutamate 267. Residues 296–300 carry the 'KMSKS' region motif; it reads KMSKS. ATP is bound at residue lysine 299.

This sequence belongs to the class-I aminoacyl-tRNA synthetase family. Monomer. It depends on Zn(2+) as a cofactor.

The protein resides in the cytoplasm. It catalyses the reaction tRNA(Cys) + L-cysteine + ATP = L-cysteinyl-tRNA(Cys) + AMP + diphosphate. The protein is Cysteine--tRNA ligase of Bartonella bacilliformis (strain ATCC 35685 / KC583 / Herrer 020/F12,63).